Reading from the N-terminus, the 165-residue chain is uncharacterized protein (165 aa).

The disordered stretch occupies residues Met1 to Pro36. A helical membrane pass occupies residues Leu135–Leu155.

The protein localises to the membrane. This is an uncharacterized protein from Homo sapiens (Human).